The chain runs to 285 residues: 2-dehydro-3-deoxyphosphooctonate aldolase (285 aa).

It belongs to the KdsA family.

The protein localises to the cytoplasm. It carries out the reaction D-arabinose 5-phosphate + phosphoenolpyruvate + H2O = 3-deoxy-alpha-D-manno-2-octulosonate-8-phosphate + phosphate. The protein operates within carbohydrate biosynthesis; 3-deoxy-D-manno-octulosonate biosynthesis; 3-deoxy-D-manno-octulosonate from D-ribulose 5-phosphate: step 2/3. Its pathway is bacterial outer membrane biogenesis; lipopolysaccharide biosynthesis. The polypeptide is 2-dehydro-3-deoxyphosphooctonate aldolase (Polaromonas naphthalenivorans (strain CJ2)).